A 159-amino-acid chain; its full sequence is Deoxyuridine 5'-triphosphate nucleotidohydrolase (159 aa).

Residues serine 79, glycine 92, aspartate 95, tyrosine 98, lysine 103, arginine 148, phenylalanine 153, and glycine 154 each contribute to the dUMP site.

Belongs to the dUTPase family. Homotrimer. It depends on Mg(2+) as a cofactor.

It carries out the reaction dUTP + H2O = dUMP + diphosphate + H(+). The protein operates within pyrimidine metabolism; dUMP biosynthesis; dUMP from dCTP (dUTP route): step 2/2. In terms of biological role, involved in nucleotide metabolism via production of dUMP, the immediate precursor of thymidine nucleotides, and decreases the intracellular concentration of dUTP so that uracil cannot be incorporated into DNA. The sequence is that of Deoxyuridine 5'-triphosphate nucleotidohydrolase (DUT1) from Candida albicans (strain SC5314 / ATCC MYA-2876) (Yeast).